A 546-amino-acid polypeptide reads, in one-letter code: Carboxypeptidase Y homolog A (546 aa).

The first 17 residues, 1-17 (MKLLASTVLVGAAAASI), serve as a signal peptide directing secretion. The propeptide occupies 18–132 (TPQQQVLQNP…KLEQYNLRAK (115 aa)). Disulfide bonds link Cys-186–Cys-426, Cys-320–Cys-334, Cys-344–Cys-367, Cys-351–Cys-360, and Cys-389–Cys-396. A glycan (N-linked (GlcNAc...) asparagine) is linked at Asn-217. Ser-273 is a catalytic residue. Asp-465 is an active-site residue. N-linked (GlcNAc...) asparagine glycosylation is present at Asn-512. The active site involves His-523.

This sequence belongs to the peptidase S10 family.

The protein resides in the vacuole. The enzyme catalyses Release of a C-terminal amino acid with broad specificity.. Functionally, vacuolar carboxypeptidase involved in degradation of small peptides. Digests preferentially peptides containing an aliphatic or hydrophobic residue in P1' position, as well as methionine, leucine or phenylalanine in P1 position of ester substrate. This chain is Carboxypeptidase Y homolog A (CPYA), found in Botryotinia fuckeliana (strain B05.10) (Noble rot fungus).